Consider the following 67-residue polypeptide: Prokaryotic ubiquitin-like protein Pup (67 aa).

Over residues 1–36 (MPQQFEQPQAQQAVTQEDDALATTQAATQTESTDQA) the composition is skewed to low complexity. Positions 1 to 38 (MPQQFEQPQAQQAVTQEDDALATTQAATQTESTDQADV) are disordered. Residues 23–61 (TTQAATQTESTDQADVLDDILDDIESTLETNAEEYVNSF) are ARC ATPase binding. Glu67 participates in a covalent cross-link: Isoglutamyl lysine isopeptide (Glu-Lys) (interchain with K-? in acceptor proteins).

Belongs to the prokaryotic ubiquitin-like protein family. In terms of assembly, strongly interacts with the proteasome-associated ATPase ARC through a hydrophobic interface; the interacting region of Pup lies in its C-terminal half. There is one Pup binding site per ARC hexamer ring.

It functions in the pathway protein degradation; proteasomal Pup-dependent pathway. In terms of biological role, protein modifier that is covalently attached to lysine residues of substrate proteins, thereby targeting them for proteasomal degradation. The tagging system is termed pupylation. In Bifidobacterium longum subsp. infantis (strain ATCC 15697 / DSM 20088 / JCM 1222 / NCTC 11817 / S12), this protein is Prokaryotic ubiquitin-like protein Pup.